The sequence spans 479 residues: U3 snoRNP-associated protein-like EMB2271 (479 aa).

The segment at 1–73 (MKLEKKKGIG…AHETVGEKRK (73 aa)) is disordered. Residues 8–17 (GIGAKRRGKK) are compositionally biased toward basic residues. Basic and acidic residues predominate over residues 18 to 38 (SSIDHDPFLEEETEKRRKFNY). Positions 39–51 (DDDDDIESVESEE) are enriched in acidic residues. Residues 52–73 (EGKVGEEVEDEFAHETVGEKRK) are compositionally biased toward basic and acidic residues. WD repeat units lie at residues 143–182 (KHQH…SDEY), 204–243 (RHNK…HVQA), 246–285 (GHCG…YIES), 288–326 (GHQS…RLIY), 328–366 (ASES…PVFI), 386–425 (PACS…SAIQ), and 431–471 (PLPG…QNGV).

It belongs to the WD repeat RRP9 family.

The protein localises to the nucleus. Its subcellular location is the nucleolus. Its function is as follows. Component of a nucleolar small nuclear ribonucleoprotein particle (snoRNP) thought to participate in the processing and modification of pre-ribosomal RNA. Essential for embryogenesis. May function during late embryogenesis. The sequence is that of U3 snoRNP-associated protein-like EMB2271 from Arabidopsis thaliana (Mouse-ear cress).